A 345-amino-acid chain; its full sequence is Phosphate acyltransferase (345 aa).

Belongs to the PlsX family. In terms of assembly, homodimer. Probably interacts with PlsY.

The protein localises to the cytoplasm. It carries out the reaction a fatty acyl-[ACP] + phosphate = an acyl phosphate + holo-[ACP]. Its pathway is lipid metabolism; phospholipid metabolism. Functionally, catalyzes the reversible formation of acyl-phosphate (acyl-PO(4)) from acyl-[acyl-carrier-protein] (acyl-ACP). This enzyme utilizes acyl-ACP as fatty acyl donor, but not acyl-CoA. The sequence is that of Phosphate acyltransferase from Thermodesulfovibrio yellowstonii (strain ATCC 51303 / DSM 11347 / YP87).